Reading from the N-terminus, the 218-residue chain is Outer-membrane lipoprotein LolB (218 aa).

Positions 1–20 (MSQVIRTLALTGLALAGLSG) are cleaved as a signal peptide. A lipid anchor (N-palmitoyl cysteine) is attached at Cys-21. Cys-21 is lipidated: S-diacylglycerol cysteine.

The protein belongs to the LolB family. Monomer.

Its subcellular location is the cell outer membrane. In terms of biological role, plays a critical role in the incorporation of lipoproteins in the outer membrane after they are released by the LolA protein. The protein is Outer-membrane lipoprotein LolB of Xanthomonas campestris pv. campestris (strain B100).